A 125-amino-acid chain; its full sequence is MKHQKRVLKFNRSGSHRDAMVKNMMIALILNHIIKTTLSKAKILRQFIEPVITRAKINTIANRRLIFAKIRNTDSVIKLFTQIGPHFYDRPGGYTRILKCGFRKGDNAPMAYIELVDRSKLVIKS.

It belongs to the bacterial ribosomal protein bL17 family. As to quaternary structure, part of the 50S ribosomal subunit. Contacts protein L32.

The protein is Large ribosomal subunit protein bL17 of Blochmanniella floridana.